Here is a 333-residue protein sequence, read N- to C-terminus: Chitinase-like protein 2 (333 aa).

An N-terminal signal peptide occupies residues 1-27 (MVSKPLFSLLLLTVALVVFQTGTLVNA). The cysteines at positions 50 and 56 are disulfide-linked. N-linked (GlcNAc...) asparagine glycosylation is present at Asn65. A disulfide bridge connects residues Cys165 and Cys175. N-linked (GlcNAc...) asparagine glycans are attached at residues Asn216 and Asn252. A disulfide bridge links Cys275 with Cys313. Residues 307–333 (PHEKLSCADQEPFSSSSSAPPSSGSSS) are disordered. Residues 320–333 (SSSSSAPPSSGSSS) are compositionally biased toward low complexity.

It belongs to the glycosyl hydrolase 19 family. In terms of tissue distribution, mostly expressed in stems, especially in xylem and interfascicular fibers.

It localises to the secreted. No chitinase activity. Required for proper cell wall biosynthesis in etiolated seedlings. Prevents lignin accumulation in hypocotyls. The protein is Chitinase-like protein 2 (CTL2) of Arabidopsis thaliana (Mouse-ear cress).